We begin with the raw amino-acid sequence, 878 residues long: Probable glucan endo-1,3-beta-glucosidase ARB_02077 (878 aa).

Positions 1–27 (MARGLVSSLLLGQLLLVLVGLFSPAGA) are cleaved as a signal peptide. N-linked (GlcNAc...) asparagine glycans are attached at residues Asn228, Asn257, Asn290, and Asn297. The segment at 373 to 472 (AGSGSKAKRL…TACPSAPVTK (100 aa)) is disordered. Positions 400–416 (APAPQPPAQSTAPPYPI) are enriched in pro residues. Positions 433-452 (VPTRVPTGGVPSGTTGTAPS) are enriched in low complexity. 4 N-linked (GlcNAc...) asparagine glycosylation sites follow: Asn505, Asn659, Asn795, and Asn862.

This sequence belongs to the glycosyl hydrolase 55 family.

Its subcellular location is the secreted. The enzyme catalyses Hydrolysis of (1-&gt;3)-beta-D-glucosidic linkages in (1-&gt;3)-beta-D-glucans.. In terms of biological role, probable glucan endo-1,3-beta-glucosidase involved in the hydrolysis of fungal cell wall. Classified as a small-oligosaccharide-producing type based its the end products: glucose, laminaribiose or laminaritetraose. This is Probable glucan endo-1,3-beta-glucosidase ARB_02077 from Arthroderma benhamiae (strain ATCC MYA-4681 / CBS 112371) (Trichophyton mentagrophytes).